The sequence spans 593 residues: Histone-arginine methyltransferase CARMER (593 aa).

Positions 122–429 constitute an SAM-dependent MTase PRMT-type domain; the sequence is ASQYFQFYGY…QRQSYDVEMD (308 aa). Residues glutamine 135, arginine 144, glycine 168, glutamate 190, glutamate 219, and threonine 247 each contribute to the S-adenosyl-L-methionine site. At arginine 482 the chain carries Asymmetric dimethylarginine; by autocatalysis. The tract at residues 521 to 540 is disordered; sequence LISSTGRQQSQQQTTPAQPL. Residues 523–535 show a composition bias toward low complexity; it reads SSTGRQQSQQQTT.

Belongs to the class I-like SAM-binding methyltransferase superfamily. Protein arginine N-methyltransferase family. Homodimer. The dimethylated protein is the major form.

It localises to the cytoplasm. Its subcellular location is the nucleus. It catalyses the reaction L-arginyl-[protein] + 2 S-adenosyl-L-methionine = N(omega),N(omega)-dimethyl-L-arginyl-[protein] + 2 S-adenosyl-L-homocysteine + 2 H(+). Functionally, methylates (mono- and asymmetric dimethylation) the guanidino nitrogens of arginyl residues in proteins. May methylate histone H3 at 'Arg-17' and activate transcription via chromatin remodeling. The polypeptide is Histone-arginine methyltransferase CARMER (Aedes aegypti (Yellowfever mosquito)).